Here is a 91-residue protein sequence, read N- to C-terminus: uncharacterized protein (91 aa).

This is an uncharacterized protein from Vaccinia virus (strain Copenhagen) (VACV).